Consider the following 553-residue polypeptide: CTP synthase (553 aa).

The tract at residues 1–270 (MTKFVFVTGG…DRIICEELRI (270 aa)) is amidoligase domain. Residue S13 participates in CTP binding. Position 13 (S13) interacts with UTP. ATP-binding positions include 14 to 19 (SLGKGI) and D71. The Mg(2+) site is built by D71 and E144. CTP-binding positions include 151–153 (DIE), 191–196 (KTKPTQ), and K227. UTP is bound by residues 191 to 196 (KTKPTQ) and K227. The Glutamine amidotransferase type-1 domain occupies 295–547 (TIGMVGKYVD…VEAALAHQQN (253 aa)). G356 serves as a coordination point for L-glutamine. C383 acts as the Nucleophile; for glutamine hydrolysis in catalysis. L-glutamine is bound by residues 384–387 (LGMQ), E407, and R473. Catalysis depends on residues H520 and E522.

Belongs to the CTP synthase family. As to quaternary structure, homotetramer.

It catalyses the reaction UTP + L-glutamine + ATP + H2O = CTP + L-glutamate + ADP + phosphate + 2 H(+). The catalysed reaction is L-glutamine + H2O = L-glutamate + NH4(+). The enzyme catalyses UTP + NH4(+) + ATP = CTP + ADP + phosphate + 2 H(+). The protein operates within pyrimidine metabolism; CTP biosynthesis via de novo pathway; CTP from UDP: step 2/2. With respect to regulation, allosterically activated by GTP, when glutamine is the substrate; GTP has no effect on the reaction when ammonia is the substrate. The allosteric effector GTP functions by stabilizing the protein conformation that binds the tetrahedral intermediate(s) formed during glutamine hydrolysis. Inhibited by the product CTP, via allosteric rather than competitive inhibition. In terms of biological role, catalyzes the ATP-dependent amination of UTP to CTP with either L-glutamine or ammonia as the source of nitrogen. Regulates intracellular CTP levels through interactions with the four ribonucleotide triphosphates. The polypeptide is CTP synthase (Ralstonia pickettii (strain 12J)).